The following is a 72-amino-acid chain: Brevinin-2GHb (72 aa).

The first 22 residues, 1 to 22 (MFTMKKSLLLLFFLGTVSLSLC), serve as a signal peptide directing secretion. A propeptide spanning residues 23 to 42 (EQERGADEDDGGEMTEELKR) is cleaved from the precursor. Cysteine 66 and cysteine 72 are oxidised to a cystine.

In terms of tissue distribution, expressed by the skin glands.

It localises to the secreted. Its function is as follows. Antimicrobial peptide. Active against the Gram-positive bacteria S.aureus FDA209P (MIC=16.5 ug/ml) and B.subtilis ATCC 6633 (MIC&gt;64 ug/ml), and the Gram-negative bacteria E.coli O111 (MIC=8.2 ug/ml) and E.coli ATCC 25922 (MIC=8.2 ug/ml). Not active against the fungus C.albicans. This chain is Brevinin-2GHb, found in Sylvirana guentheri (Gunther's frog).